A 547-amino-acid chain; its full sequence is (E)-beta-caryophyllene synthase (547 aa).

Mg(2+) is bound by residues Asp302 and Asp306. Substrate contacts are provided by Asp302, Asp306, Arg443, and Asn446. Positions 302–306 match the DDXXD motif motif; the sequence is DDLYD. Asn446 and Glu454 together coordinate Mg(2+).

The protein belongs to the terpene synthase family. In terms of assembly, monomer. Mg(2+) serves as cofactor. The cofactor is Mn(2+).

The protein resides in the cytoplasm. It carries out the reaction (2E,6E)-farnesyl diphosphate = (-)-(E)-beta-caryophyllene + diphosphate. It functions in the pathway secondary metabolite biosynthesis; terpenoid biosynthesis. Its function is as follows. Component of the volatile terpenes biosynthesis pathways. Sesquiterpene synthase that converts farnesyl diphosphate to (E)-beta-caryophyllene. Involved in indirect defense by producing volatile signals attracting natural enemies of herbivores. The polypeptide is (E)-beta-caryophyllene synthase (Zea mays (Maize)).